The chain runs to 459 residues: Putative metabolite transport protein YdjK (459 aa).

The Cytoplasmic portion of the chain corresponds to 1 to 25 (MEQITKPHCGARLDRLPDCRWHSSM). A helical membrane pass occupies residues 26-46 (FAIVAFGLLVCWSNAVGGLIL). Residues 47-60 (AQLKALGWTDNSTT) are Periplasmic-facing. A helical transmembrane segment spans residues 61-81 (ATFSAITTAGMFLGALVGGII). The Cytoplasmic segment spans residues 82-90 (GDKTGRRNA). Residues 91 to 111 (FILYEAIHIASMVVGAFSPNM) form a helical membrane-spanning segment. Position 112 (Asp112) is a topological domain, periplasmic. The chain crosses the membrane as a helical span at residues 113-133 (FLIACRFVMGVGLGALLVTLF). At 134–153 (AGFTEYMPGRNRGTWSSRVS) the chain is on the cytoplasmic side. The chain crosses the membrane as a helical span at residues 154 to 174 (FIGNWSYPLCSLIAMGLTPLI). The Periplasmic portion of the chain corresponds to 175–181 (SAEWNWR). Residues 182–202 (VQLLIPAILSLIATALAWRYF) traverse the membrane as a helical segment. The Cytoplasmic portion of the chain corresponds to 203–271 (PESPRWLESR…LLKRVILGSC (69 aa)). A helical membrane pass occupies residues 272-292 (VLIAMNVVQYTLINWLPTIFM). The Periplasmic portion of the chain corresponds to 293–301 (TQGINLKDS). A helical transmembrane segment spans residues 302–322 (IVLNTMSMFGAPFGIFIAMLV). Residues 323-329 (MDKIPRK) are Cytoplasmic-facing. The chain crosses the membrane as a helical span at residues 330-350 (TMGVGLLILIAVLGYIYSLQT). A topological domain (periplasmic) is located at residue Ser351. Residues 352 to 372 (MLLITLIGFFLITFVYMYVCY) traverse the membrane as a helical segment. Residues 373–399 (ASAVYVPEIWPTEAKLRGSGLANAVGR) are Cytoplasmic-facing. 2 consecutive transmembrane segments (helical) span residues 400-420 (ISGI…GVTG) and 421-441 (VFIL…TIGI). Topologically, residues 442–459 (ETKGVSVESLSIDAVANK) are cytoplasmic.

Belongs to the major facilitator superfamily. Sugar transporter (TC 2.A.1.1) family.

The protein resides in the cell inner membrane. This chain is Putative metabolite transport protein YdjK (ydjK), found in Escherichia coli (strain K12).